The chain runs to 165 residues: Large ribosomal subunit protein uL11 (165 aa).

Ser-38 carries the post-translational modification Phosphoserine. Lys-40 participates in a covalent cross-link: Glycyl lysine isopeptide (Lys-Gly) (interchain with G-Cter in SUMO2). Residue Lys-48 forms a Glycyl lysine isopeptide (Lys-Gly) (interchain with G-Cter in ubiquitin) linkage. Lys-54 carries the post-translational modification N6-acetyllysine. Lys-83 participates in a covalent cross-link: Glycyl lysine isopeptide (Lys-Gly) (interchain with G-Cter in ubiquitin). A Phosphoserine modification is found at Ser-165.

Belongs to the universal ribosomal protein uL11 family. As to quaternary structure, component of the large ribosomal subunit. Mature ribosomes consist of a small (40S) and a large (60S) subunit. The 40S subunit contains about 33 different proteins and 1 molecule of RNA (18S). The 60S subunit contains about 49 different proteins and 3 molecules of RNA (28S, 5.8S and 5S). Ubiquitinated at Lys-48 and Lys-83 by RNF14 and RNF25 in response to ribosome collisions (ribosome stalling).

It is found in the cytoplasm. Functionally, component of the large ribosomal subunit. The ribosome is a large ribonucleoprotein complex responsible for the synthesis of proteins in the cell. Binds directly to 26S ribosomal RNA. In Rattus norvegicus (Rat), this protein is Large ribosomal subunit protein uL11 (Rpl12).